A 429-amino-acid polypeptide reads, in one-letter code: Keratin, type I cytoskeletal 18 (429 aa).

The segment at 2 to 78 is head; that stretch reads SYSRSVYSSS…NVNLIGGGQN (77 aa). Residues 79-114 are coil 1A; it reads EKETMQDLNDRLASYLERVRSLEAANKKLEVQIRQH. Residues 79–389 enclose the IF rod domain; that stretch reads EKETMQDLND…RLLEGDGSFD (311 aa). The linker 1 stretch occupies residues 115 to 130; that stretch reads TEKKGPSKDWSPYYKT. A coil 1B region spans residues 131-222; sequence IEDLRKQVFD…KNHQDDVTEL (92 aa). The linker 12 stretch occupies residues 223-246; it reads QAQVARSAVTVEVDAPKSQDLGKI. Residues 247–385 are coil 2; the sequence is MTELRAQYDG…HTYRRLLEGD (139 aa). The interval 386–429 is tail; that stretch reads GSFDLQDAVPTVTTQTVKKVITTTQRIVDGKVVSESNDTEVLKS.

It belongs to the intermediate filament family. Heterotetramer of two type I and two type II keratins. Keratin-18 associates with keratin-8. Phosphorylated. In terms of processing, proteolytically cleaved by caspases during epithelial cell apoptosis.

Functionally, when phosphorylated, plays a role in filament reorganization. The protein is Keratin, type I cytoskeletal 18 of Xenopus tropicalis (Western clawed frog).